A 297-amino-acid polypeptide reads, in one-letter code: Alpha/beta-gliadin A-IV (297 aa).

A signal peptide spans Met-1–Ala-20. Low complexity predominate over residues Gln-29–Gln-55. Disordered regions lie at residues Gln-29–Gln-127 and Gln-234–Pro-257. Residues Pro-56–Gln-67 show a composition bias toward pro residues. Residues Pro-68–Pro-80 show a composition bias toward low complexity. Residues Phe-81–Phe-101 show a composition bias toward pro residues. Composition is skewed to low complexity over residues Arg-102–Gln-127 and Gln-234–Gln-250.

This sequence belongs to the gliadin/glutenin family. Post-translationally, substrate of transglutaminase.

Gliadin is the major seed storage protein in wheat. The polypeptide is Alpha/beta-gliadin A-IV (Triticum aestivum (Wheat)).